The sequence spans 391 residues: Serpin B13 (391 aa).

The protein belongs to the serpin family. Ov-serpin subfamily. Skin specific.

Its subcellular location is the cytoplasm. May play a role in the proliferation or differentiation of keratinocytes. The polypeptide is Serpin B13 (SERPINB13) (Homo sapiens (Human)).